The primary structure comprises 282 residues: Blarina toxin (282 aa).

A signal peptide spans 1-17; that stretch reads MCFLLLCLTLTLAGTGA. The propeptide at 18 to 29 is activation peptide; sequence VPTGPSIEIHSR. Positions 30-279 constitute a Peptidase S1 domain; it reads IIGGWECDKH…YISWIQETIK (250 aa). 5 cysteine pairs are disulfide-bonded: Cys-36/Cys-194, Cys-57/Cys-73, Cys-170/Cys-240, Cys-205/Cys-219, and Cys-230/Cys-255. His-72 acts as the Charge relay system in catalysis. Ser-100 is a glycosylation site (O-linked (GalNAc...) serine). N-linked (GlcNAc...) asparagine glycans are attached at residues Asn-109 and Asn-122. Asp-138 serves as the catalytic Charge relay system. Residue Ser-234 is the Charge relay system of the active site.

Belongs to the peptidase S1 family. Kallikrein subfamily. Submaxillary and sublingual salivary glands.

The protein localises to the secreted. Its activity is regulated as follows. Strongly inhibited by aprotinin, moderately inhibited by secretory leukoprotease inhibitor, the Kunitz-type soybean trypsin inhibitor, and leupeptin, and not inhibited by urinary trypsin inhibitor or alpha-1 protease inhibitor. Its function is as follows. Has kallikrein-like activity, converts kininogens to kinins, and has dilatory effects on the blood vessel walls. Shows highest activity toward Pro-Phe-Arg-MCA and Boc-Val-Leu-Lys-MCA in vitro. Has preference for Arg and Lys in position P1 and hydrophobic residues in position P2. This Blarina brevicauda (Northern short-tailed shrew) protein is Blarina toxin (BTX).